A 652-amino-acid polypeptide reads, in one-letter code: Acetyl-coenzyme A synthetase (652 aa).

Residues 191–194 (RAGR), threonine 311, and asparagine 335 each bind CoA. ATP-binding positions include 387–389 (GEP), 411–416 (DTWWQT), aspartate 500, and arginine 515. Serine 523 contacts CoA. Arginine 526 serves as a coordination point for ATP. 3 residues coordinate Mg(2+): valine 537, histidine 539, and isoleucine 542. Position 584 (arginine 584) interacts with CoA. Lysine 609 is subject to N6-acetyllysine.

The protein belongs to the ATP-dependent AMP-binding enzyme family. Mg(2+) is required as a cofactor. Acetylated. Deacetylation by the SIR2-homolog deacetylase activates the enzyme.

It catalyses the reaction acetate + ATP + CoA = acetyl-CoA + AMP + diphosphate. Functionally, catalyzes the conversion of acetate into acetyl-CoA (AcCoA), an essential intermediate at the junction of anabolic and catabolic pathways. Acs undergoes a two-step reaction. In the first half reaction, Acs combines acetate with ATP to form acetyl-adenylate (AcAMP) intermediate. In the second half reaction, it can then transfer the acetyl group from AcAMP to the sulfhydryl group of CoA, forming the product AcCoA. Its function is as follows. Enables the cell to use acetate during aerobic growth to generate energy via the TCA cycle, and biosynthetic compounds via the glyoxylate shunt. Acetylates CheY, the response regulator involved in flagellar movement and chemotaxis. This chain is Acetyl-coenzyme A synthetase, found in Citrobacter koseri (strain ATCC BAA-895 / CDC 4225-83 / SGSC4696).